The following is a 326-amino-acid chain: E3 ubiquitin-protein ligase SINAT3 (326 aa).

The segment at 1-44 is disordered; it reads MDLDSMDCTSTMDVTDDEEIHQDRHSYASVSKHHHTNNNTTNVN. The RING-type zinc-finger motif lies at 63–99; it reads CPVCTNSMYPPIHQCHNGHTLCSTCKARVHNRCPTCR. The tract at residues 113–306 is SBD; sequence VAESLELPCK…KELKLRVTGR (194 aa). Residues 116–176 form an SIAH-type zinc finger; sequence SLELPCKHMS…LVAHLRDDHK (61 aa). The Zn(2+) site is built by cysteine 121, cysteine 128, histidine 140, cysteine 144, cysteine 151, cysteine 158, histidine 170, and histidine 175.

The protein belongs to the SINA (Seven in absentia) family. As to quaternary structure, interacts with SINAT6. Interacts with WAV3. Interacts with FREE1. Interacts with ELC/VPS23A.

The protein resides in the endosome. Its subcellular location is the multivesicular body. It localises to the cytoplasmic vesicle. It is found in the autophagosome. The catalysed reaction is S-ubiquitinyl-[E2 ubiquitin-conjugating enzyme]-L-cysteine + [acceptor protein]-L-lysine = [E2 ubiquitin-conjugating enzyme]-L-cysteine + N(6)-ubiquitinyl-[acceptor protein]-L-lysine.. It participates in protein modification; protein ubiquitination. In terms of biological role, E3 ubiquitin-protein ligase that mediates ubiquitination and subsequent proteasomal degradation of target proteins. E3 ubiquitin ligases accept ubiquitin from an E2 ubiquitin-conjugating enzyme in the form of a thioester and then directly transfers the ubiquitin to targeted substrates. It probably triggers the ubiquitin-mediated degradation of different substrates. Modulates directly the ubiquitination and proteasomal-dependent degradation of FREE1, a component of the ESCRT-I complex. Modulates directly the ubiquitination and proteasomal-dependent degradation of ELC/VPS23A, a component of the ESCRT-I complex. The sequence is that of E3 ubiquitin-protein ligase SINAT3 from Arabidopsis thaliana (Mouse-ear cress).